An 874-amino-acid polypeptide reads, in one-letter code: MDIGKRYMPHELENKWYKLWEENHSFEPKPGNGKFSIVIPPPNITGRIHIGHALNIVLQDISVRYNRMKGKETVWIPGEDHAGIATQHVVEKYLLKEEGKRREDYTREEFLKITWDWANKYRNHIREQIKALAASVDWSRERFTLDEGLNQAVRKVFVSLYNEGLIYKGKYIVNWCPSCGTVLADDEVEHSEEKGKLWYIKYPLENTQNYVTVATTRPETMLGDTALAVNPSDERYKNLIGETAILPIVGRKLKIIADPYVDTNFGTGVVKVTPAHDPNDYQIGLRHDLERIQIIDENARINENGGKYAGLDRYIARERIVEDLKKEGLLEKEEDYTHSVGHCYRCDTVIEPLLLDQWFVKMKPLAEKAIQVVENDEIKFYPERWKKVYLNWMYEIRDWCISRQLWWGHRIPVWYCQNCGHVNVSVEDVKKCEKCGSTDLKQDEDVLDTWFSSALWPFSTLGWPEETEDLKKYYPTDLLVTGFDIIFFWVARMIMMGEKFMGEKPFHDVYLHQLVRDKYGRKMSKSLGNGVDPLEVINEYGTDPVRFTLSVLAAQGRDIKLDVGSFDAYRKFANKIWNAARFVLLNMEDYEKTVLKDEDLKIEDKWILTRLNSTILEISKDLEVYNYDQAARKLYDFFWNELCDWYIEASKNRLNSIGKDKLVVQNVILQVFDSSLRLLHPFMPYISEELWQKLPIEKDSELLISAKWPEYNESNIYPEAEKVFSKVMELVSGIRNVKAEMDIPQTQEVDVKYKIVAKNDDFIEKNKNLIEHLAFLINITQTEVKPAKSATAYVDESVEVYIPLGDYIDIDTEKQRLTKKLEKLSKDIELYNKKLSNKNFVEKADPDVVEKTKEDLIESEKKYQKLQALLKEIS.

A 'HIGH' region motif is present at residues Pro-42–His-52. The short motif at Lys-522 to Ser-526 is the 'KMSKS' region element. Lys-525 lines the ATP pocket. Residues Asp-806 to Ser-874 are a coiled coil.

This sequence belongs to the class-I aminoacyl-tRNA synthetase family. ValS type 1 subfamily. Monomer.

It is found in the cytoplasm. The catalysed reaction is tRNA(Val) + L-valine + ATP = L-valyl-tRNA(Val) + AMP + diphosphate. Its function is as follows. Catalyzes the attachment of valine to tRNA(Val). As ValRS can inadvertently accommodate and process structurally similar amino acids such as threonine, to avoid such errors, it has a 'posttransfer' editing activity that hydrolyzes mischarged Thr-tRNA(Val) in a tRNA-dependent manner. This chain is Valine--tRNA ligase, found in Petrotoga mobilis (strain DSM 10674 / SJ95).